The sequence spans 99 residues: Prostate and testis expressed protein 14 (99 aa).

The first 21 residues, 1-21 (MGKNILLLLLGLSFVIGFLQA), serve as a signal peptide directing secretion. One can recognise a UPAR/Ly6 domain in the interval 22–99 (LRCLECDMLN…CHDQSLCNEF (78 aa)). Cystine bridges form between Cys-24–Cys-51, Cys-27–Cys-36, Cys-43–Cys-69, Cys-73–Cys-89, and Cys-90–Cys-96. Residue Asn-40 is glycosylated (N-linked (GlcNAc...) asparagine). N-linked (GlcNAc...) asparagine glycosylation is found at Asn-75 and Asn-82.

It belongs to the PATE family. In terms of assembly, monomer.

It is found in the secreted. This Rattus norvegicus (Rat) protein is Prostate and testis expressed protein 14.